We begin with the raw amino-acid sequence, 296 residues long: MTTTLSRPTDGEGSVQVQQDPSMKIEEGALVIAVYGKGGIGKSTTSSNLSAAFSKLGKRVLQIGCDPKHDSTFTLTHSMVPTVIDILEEVDFHSEELRPDDFVFTGYNGVKCVESGGPPAGTGCGGYVTGQTVKLLKEHHLLEDTDVVIFDVLGDVVCGGFAAPLQHANYCLIVTANDFDSIFAMNRIVQAIQAKAKNYKVRLGGVIANRSADTDQIDKFNERTGLRTMAHFKDVDAIRRSRLKKCTIFEMDDDDDAVKAVKNEYLRLAQNMLDNVEPLEAVSLKDREIFDLLGFD.

The interval 1–20 is disordered; that stretch reads MTTTLSRPTDGEGSVQVQQD. ATP is bound by residues 39 to 44 and K68; that span reads GIGKST. S43 serves as a coordination point for Mg(2+). C124 and C158 together coordinate [4Fe-4S] cluster. ATP is bound at residue 209-210; sequence NR.

The protein belongs to the NifH/BchL/ChlL family. In terms of assembly, homodimer. Protochlorophyllide reductase is composed of three subunits; ChlL, ChlN and ChlB. [4Fe-4S] cluster is required as a cofactor.

The catalysed reaction is chlorophyllide a + oxidized 2[4Fe-4S]-[ferredoxin] + 2 ADP + 2 phosphate = protochlorophyllide a + reduced 2[4Fe-4S]-[ferredoxin] + 2 ATP + 2 H2O. It functions in the pathway porphyrin-containing compound metabolism; chlorophyll biosynthesis (light-independent). Its function is as follows. Component of the dark-operative protochlorophyllide reductase (DPOR) that uses Mg-ATP and reduced ferredoxin to reduce ring D of protochlorophyllide (Pchlide) to form chlorophyllide a (Chlide). This reaction is light-independent. The L component serves as a unique electron donor to the NB-component of the complex, and binds Mg-ATP. This Synechococcus sp. (strain CC9902) protein is Light-independent protochlorophyllide reductase iron-sulfur ATP-binding protein.